The following is a 473-amino-acid chain: ATP synthase subunit beta (473 aa).

Position 153–160 (153–160 (GGAGVGKT)) interacts with ATP.

The protein belongs to the ATPase alpha/beta chains family. In terms of assembly, F-type ATPases have 2 components, CF(1) - the catalytic core - and CF(0) - the membrane proton channel. CF(1) has five subunits: alpha(3), beta(3), gamma(1), delta(1), epsilon(1). CF(0) has three main subunits: a(1), b(2) and c(9-12). The alpha and beta chains form an alternating ring which encloses part of the gamma chain. CF(1) is attached to CF(0) by a central stalk formed by the gamma and epsilon chains, while a peripheral stalk is formed by the delta and b chains.

The protein resides in the cell inner membrane. It carries out the reaction ATP + H2O + 4 H(+)(in) = ADP + phosphate + 5 H(+)(out). Its function is as follows. Produces ATP from ADP in the presence of a proton gradient across the membrane. The catalytic sites are hosted primarily by the beta subunits. In Rickettsia rickettsii (strain Iowa), this protein is ATP synthase subunit beta.